A 491-amino-acid chain; its full sequence is Probable CtpA-like serine protease (491 aa).

Residues 1–22 form a disordered region; that stretch reads MNDHQKNHATSQDDNTKSTPSK. The span at 8-22 shows a compositional bias: polar residues; sequence HATSQDDNTKSTPSK. A helical membrane pass occupies residues 31-51; sequence LWHFILVILGIILLTSIITVV. The region spanning 119-201 is the PDZ domain; the sequence is TKQFNEGVSG…TYVTLTIKRG (83 aa). Active-site charge relay system residues include Ser-324, Asp-335, and Lys-349.

Belongs to the peptidase S41A family.

The protein resides in the cell membrane. The protein is Probable CtpA-like serine protease of Staphylococcus epidermidis (strain ATCC 12228 / FDA PCI 1200).